The primary structure comprises 133 residues: Putative nickel-responsive regulator (133 aa).

Residues H74, H85, H87, and C93 each coordinate Ni(2+).

It belongs to the transcriptional regulatory CopG/NikR family. It depends on Ni(2+) as a cofactor.

Transcriptional regulator. The protein is Putative nickel-responsive regulator of Saccharolobus solfataricus (strain ATCC 35092 / DSM 1617 / JCM 11322 / P2) (Sulfolobus solfataricus).